Consider the following 780-residue polypeptide: MIDVAPESKKAKDLKGDFWDAKNIQISIGEIITEEKPPEEEVKGPKPRPHVTDLRSWDMKLLERYEPFYAPFCDMCCLCTYGKCELLGKKGACGIDAATQQARTVLLACLIGTAAHAGHARHLVDHLIERLGEDYKIDLGSNVDIEAPITRTVMGKRPATLGDLREVMDYAEEQMSHLLSACHTGQEGDSKDFESKAFHAGLMDDLTREVADLAQIVALDLPKGDEDAPLVELGFGTIDTEKPVVLCIGHNVLPGADIVDYLDENEMEDQVEVCGICCAAIDVTRYNEAAKVVGPLSKQLRFIRSGVADVIVVDEQCVRTDVLEEALKNRSAVIATTDKMCLGLPDMTDEDPDKIVNDLINGNIEGALILDPEKVGEVAVKTAMKLAPIRKSLKKLPDIDEIIELASECTDCGWCQRVCPNSLPVMDAVKKAADGDLSKLEEMAIEELCYTCGRCEQECERNIPIVSMVTKAGERRVKDEKYRIRAGRGPAQDVEIRRVGAPIVLGDIPGVVAFVGCSNYPEGGKDVALMAKEFLERNYIVVTTGCGAMSIGEYRDEDGQTLYEKYGGQFDAKGLVNMGSCVSNAHVSGAAIKIANIFAQKPLEGNFEEIADYILNRVGACGVAWGAYSQKAAAIATGVNRWGIPVVLGPHGSKYRRLFLGRADDEEKWKLKDLRTGEVIDGEPAPEHLLYAAENREEATVMIAKLCIRPTDTPKGRQMKLSNYIDLHRKYLGTIPDDIDRFIRTEKDIPIVYKRDVMKILEEKNWKPRELPKEPSLLER.

Cysteine 73, cysteine 76, cysteine 77, cysteine 79, cysteine 84, and cysteine 93 together coordinate [4Fe-4S] cluster. Histidine 116 is a binding site for CO. [Ni-4Fe-4S] cluster contacts are provided by histidine 250, cysteine 278, and cysteine 317. 4Fe-4S ferredoxin-type domains lie at 399 to 429 (IDEIIELASECTDCGWCQRVCPNSLPVMDAV) and 440 to 469 (LEEMAIEELCYTCGRCEQECERNIPIVSMV). [4Fe-4S] cluster is bound by residues cysteine 409, cysteine 412, cysteine 415, cysteine 419, cysteine 449, cysteine 452, cysteine 455, and cysteine 459. The [Ni-4Fe-4S] cluster site is built by cysteine 517, cysteine 546, and cysteine 581.

Belongs to the Ni-containing carbon monoxide dehydrogenase family. In terms of assembly, heterotetramer of two alpha and two epsilon subunits. The ACDS complex is made up of alpha, epsilon, beta, gamma and delta subunits with a probable stoichiometry of (alpha(2)epsilon(2))(4)-beta(8)-(gamma(1)delta(1))(8). [4Fe-4S] cluster is required as a cofactor. [Ni-4Fe-4S] cluster serves as cofactor.

The enzyme catalyses CO + 2 oxidized [2Fe-2S]-[ferredoxin] + H2O = 2 reduced [2Fe-2S]-[ferredoxin] + CO2 + 2 H(+). Functionally, part of the ACDS complex that catalyzes the reversible cleavage of acetyl-CoA, allowing autotrophic growth from CO(2). The alpha-epsilon subcomponent functions as a carbon monoxide dehydrogenase. The sequence is that of Acetyl-CoA decarbonylase/synthase complex subunit alpha from Methanothermobacter thermautotrophicus (strain ATCC 29096 / DSM 1053 / JCM 10044 / NBRC 100330 / Delta H) (Methanobacterium thermoautotrophicum).